A 417-amino-acid chain; its full sequence is Autophagy-related protein 18 (417 aa).

WD repeat units follow at residues 1–36 (MSMNFVTFNQDYSYLAVGTSKGFRIFTTDPFGKSYE), 76–114 (ELTFPTTVLAIRLNRKRLVIVLEDQIYIYDIQTMKLVYT), 185–225 (AHKS…KLYQ), and 230–269 (SMPSRIYSMSFNITSTLLCVSSATETIHIFKLGQQQGLSK). A L/FRRG motif motif is present at residues 226–230 (FRRGS). Residues 267–300 (LSKTSSPSRKLESSRGSGDESAVESASSEMSSRK) are disordered. A compositionally biased stretch (low complexity) spans 285-296 (DESAVESASSEM). WD repeat units lie at residues 300 to 346 (KHNG…AWIK) and 355 to 395 (GGSG…GGEG).

This sequence belongs to the WD repeat PROPPIN family. In terms of assembly, component of the PI(3,5)P2 regulatory complex.

It localises to the preautophagosomal structure membrane. Its subcellular location is the vacuole membrane. It is found in the endosome membrane. Its function is as follows. The PI(3,5)P2 regulatory complex regulates both the synthesis and turnover of phosphatidylinositol 3,5-bisphosphate (PtdIns(3,5)P2). Necessary for proper vacuole morphology. Plays an important role in osmotically-induced vacuole fragmentation. Required for cytoplasm to vacuole transport (Cvt) vesicle formation, pexophagy and starvation-induced autophagy. Involved in correct ATG9 trafficking to the pre-autophagosomal structure. Might also be involved in premeiotic DNA replication. This Coccidioides immitis (strain RS) (Valley fever fungus) protein is Autophagy-related protein 18 (ATG18).